Here is a 350-residue protein sequence, read N- to C-terminus: DNA-directed RNA polymerase subunit alpha (350 aa).

Positions 1-226 (MLISQRPTLS…ELFGLARELN (226 aa)) are alpha N-terminal domain (alpha-NTD). An alpha C-terminal domain (alpha-CTD) region spans residues 241–350 (ADHIASFALP…NQDYAETEQL (110 aa)). Residues 326-350 (ATGTWNSDAGYDLEDNQDYAETEQL) are disordered. The span at 336-350 (YDLEDNQDYAETEQL) shows a compositional bias: acidic residues.

The protein belongs to the RNA polymerase alpha chain family. In terms of assembly, homodimer. The RNAP catalytic core consists of 2 alpha, 1 beta, 1 beta' and 1 omega subunit. When a sigma factor is associated with the core the holoenzyme is formed, which can initiate transcription.

The catalysed reaction is RNA(n) + a ribonucleoside 5'-triphosphate = RNA(n+1) + diphosphate. Its function is as follows. DNA-dependent RNA polymerase catalyzes the transcription of DNA into RNA using the four ribonucleoside triphosphates as substrates. The sequence is that of DNA-directed RNA polymerase subunit alpha from Mycobacterium sp. (strain JLS).